A 209-amino-acid chain; its full sequence is Ubiquitin-conjugating enzyme E2 S (209 aa).

The UBC core domain maps to Gln-14–Gln-160. Catalysis depends on Cys-98, which acts as the Glycyl thioester intermediate. The segment at Ala-168–Lys-194 is disordered. Positions Ala-184 to Lys-194 are enriched in basic and acidic residues.

This sequence belongs to the ubiquitin-conjugating enzyme family.

The catalysed reaction is S-ubiquitinyl-[E1 ubiquitin-activating enzyme]-L-cysteine + [E2 ubiquitin-conjugating enzyme]-L-cysteine = [E1 ubiquitin-activating enzyme]-L-cysteine + S-ubiquitinyl-[E2 ubiquitin-conjugating enzyme]-L-cysteine.. The protein operates within protein modification; protein ubiquitination. In terms of biological role, catalyzes the covalent attachment of ubiquitin to other proteins. Acts as an essential factor of the anaphase promoting complex/cyclosome (APC/C), a cell cycle-regulated ubiquitin ligase that controls progression through mitosis. Acts by specifically elongating polyubiquitin chains initiated by the E2 enzyme vih/UbcH10 on APC/C substrates, enhancing the degradation of APC/C substrates by the proteasome and promoting mitotic exit. This Drosophila melanogaster (Fruit fly) protein is Ubiquitin-conjugating enzyme E2 S.